The primary structure comprises 471 residues: Probable pyruvate, phosphate dikinase regulatory protein, chloroplastic (471 aa).

A chloroplast-targeting transit peptide spans 1 to 49 (MSSSSSTSPRFGSMISAKLASPPPSLLLPPSPRLQGRRLTPPSCTPGTP). Residues 1 to 133 (MSSSSSTSPR…PHPSSDEAAS (133 aa)) are disordered. Residues 21–32 (SPPPSLLLPPSP) show a composition bias toward pro residues. Residues 71 to 88 (GSATTPRSPAQLGSSQLH) are compositionally biased toward polar residues. Basic residues predominate over residues 89-99 (RWSRARAHRSG). A compositionally biased stretch (basic and acidic residues) spans 100 to 111 (RRLEWPTIRDRG). Residue 171 to 178 (HSVNAALG) participates in ADP binding.

This sequence belongs to the pyruvate, phosphate/water dikinase regulatory protein family. PDRP subfamily.

It is found in the plastid. Its subcellular location is the chloroplast. The enzyme catalyses N(tele)-phospho-L-histidyl/L-threonyl-[pyruvate, phosphate dikinase] + ADP = N(tele)-phospho-L-histidyl/O-phospho-L-threonyl-[pyruvate, phosphate dikinase] + AMP + H(+). It carries out the reaction N(tele)-phospho-L-histidyl/O-phospho-L-threonyl-[pyruvate, phosphate dikinase] + phosphate + H(+) = N(tele)-phospho-L-histidyl/L-threonyl-[pyruvate, phosphate dikinase] + diphosphate. Its activity is regulated as follows. Regulated by light/dark exposure. Its function is as follows. Bifunctional serine/threonine kinase and phosphorylase involved in the dark/light-mediated regulation of PPDK by catalyzing its phosphorylation/dephosphorylation. Dark/light-induced changes in stromal concentrations of the competing ADP and Pi substrates govern the direction of the reaction. In the dark, phosphorylates the catalytic intermediate of PPDK (PPDK-HisP), inactivating it. Light exposure induces the phosphorolysis reaction that reactivates PPDK. The chain is Probable pyruvate, phosphate dikinase regulatory protein, chloroplastic (PDRP1) from Oryza sativa subsp. indica (Rice).